The sequence spans 338 residues: Flap endonuclease 1 (338 aa).

Residues 1–98 (MGVNLSSILI…ETLRERSLIK (98 aa)) form an N-domain region. Mg(2+) contacts are provided by Asp27, Asp80, Glu152, Glu154, Asp173, Asp175, and Asp236. The interval 116-257 (KIRSLSSRIN…TALSLIKKYN (142 aa)) is I-domain. The interval 330–338 (HQSSLDRFF) is interaction with PCNA.

The protein belongs to the XPG/RAD2 endonuclease family. FEN1 subfamily. As to quaternary structure, interacts with PCNA. PCNA stimulates the nuclease activity without altering cleavage specificity. Requires Mg(2+) as cofactor.

Structure-specific nuclease with 5'-flap endonuclease and 5'-3' exonuclease activities involved in DNA replication and repair. During DNA replication, cleaves the 5'-overhanging flap structure that is generated by displacement synthesis when DNA polymerase encounters the 5'-end of a downstream Okazaki fragment. Binds the unpaired 3'-DNA end and kinks the DNA to facilitate 5' cleavage specificity. Cleaves one nucleotide into the double-stranded DNA from the junction in flap DNA, leaving a nick for ligation. Also involved in the base excision repair (BER) pathway. Acts as a genome stabilization factor that prevents flaps from equilibrating into structures that lead to duplications and deletions. Also possesses 5'-3' exonuclease activity on nicked or gapped double-stranded DNA. This chain is Flap endonuclease 1, found in Picrophilus torridus (strain ATCC 700027 / DSM 9790 / JCM 10055 / NBRC 100828 / KAW 2/3).